The following is a 418-amino-acid chain: Aspartate aminotransferase, cytoplasmic (418 aa).

S2 carries the N-acetylserine modification. Residues G38, W135, and N188 each contribute to the L-aspartate site. K255 is subject to N6-(pyridoxal phosphate)lysine. Position 387 (R387) interacts with L-aspartate. S389 carries the phosphoserine modification.

The protein belongs to the class-I pyridoxal-phosphate-dependent aminotransferase family. In terms of assembly, homodimer. It depends on pyridoxal 5'-phosphate as a cofactor.

It is found in the cytoplasm. Its subcellular location is the peroxisome. The catalysed reaction is L-aspartate + 2-oxoglutarate = oxaloacetate + L-glutamate. Plays a key role in amino acid metabolism. The protein is Aspartate aminotransferase, cytoplasmic (AAT2) of Saccharomyces cerevisiae (strain ATCC 204508 / S288c) (Baker's yeast).